A 360-amino-acid polypeptide reads, in one-letter code: Peptide chain release factor 1 (360 aa).

Gln-237 bears the N5-methylglutamine mark.

This sequence belongs to the prokaryotic/mitochondrial release factor family. Methylated by PrmC. Methylation increases the termination efficiency of RF1.

The protein resides in the cytoplasm. Functionally, peptide chain release factor 1 directs the termination of translation in response to the peptide chain termination codons UAG and UAA. In Pseudomonas savastanoi pv. phaseolicola (strain 1448A / Race 6) (Pseudomonas syringae pv. phaseolicola (strain 1448A / Race 6)), this protein is Peptide chain release factor 1.